We begin with the raw amino-acid sequence, 506 residues long: MTAQTQCQDSQVLLTMTNVCKSFPGVKALDNANLTVRSHSVHALMGENGAGKSTLLKCLFGIYAKDEGEILFLGEPVNFKTSKEALENGISMVHQELNLVRQTSVMDNLWLGRYPLKGPFVDHAKMYRDTKAIFDELDIDVDPKEKVAKLSVSQMQMIEIAKAFSYNAKIVIMDEPTSSLSEKEVEHLFKIIDKLKQRGCGIIYISHKMDEIFKICDEITILRDGKWINTVNVKESTMEQIVGMMVGRELTQRFPEKTNVPKEVILQVENLTAKNQPSIQDVSFELRKGEILGIAGLVGAKRTDIVEAIFGVRELIEGTIKLHGKTVKNHTALEAINNGFALVTEERRSTGIYSNLSIEFNSLISNMKSYLTPWKLLSTKKMKSDTQWVIDSMNVKTPSHRTTIGSLSGGNQQKVIIGRWLLTQPEILMLDEPTRGIDIGAKFEIYQLIQELAKKDKGIIMISSEMPELLGVTDRILVMSNGKLAGIVESAKTSQEEILQLAAKYL.

2 consecutive ABC transporter domains span residues 14 to 249 and 260 to 506; these read LTMT…VGRE and VPKE…AKYL. 46–53 is an ATP binding site; the sequence is GENGAGKS.

This sequence belongs to the ABC transporter superfamily. Galactose/methyl galactoside importer (TC 3.A.1.2.3) family. In terms of assembly, the complex is composed of one ATP-binding protein (MglA), two transmembrane proteins (MglC) and a solute-binding protein (MglB).

It localises to the cell inner membrane. It catalyses the reaction D-galactose(out) + ATP + H2O = D-galactose(in) + ADP + phosphate + H(+). The enzyme catalyses methyl beta-D-galactoside(out) + ATP + H2O = methyl beta-D-galactoside(in) + ADP + phosphate + H(+). Part of the ABC transporter complex MglABC involved in galactose/methyl galactoside import. Responsible for energy coupling to the transport system. This chain is Galactose/methyl galactoside import ATP-binding protein MglA, found in Haemophilus influenzae (strain 86-028NP).